Reading from the N-terminus, the 321-residue chain is GTP cyclohydrolase FolE2 (321 aa).

This sequence belongs to the GTP cyclohydrolase IV family.

It catalyses the reaction GTP + H2O = 7,8-dihydroneopterin 3'-triphosphate + formate + H(+). The protein operates within cofactor biosynthesis; 7,8-dihydroneopterin triphosphate biosynthesis; 7,8-dihydroneopterin triphosphate from GTP: step 1/1. In terms of biological role, converts GTP to 7,8-dihydroneopterin triphosphate. The chain is GTP cyclohydrolase FolE2 from Paracoccus denitrificans (strain Pd 1222).